The following is a 141-amino-acid chain: Large ribosomal subunit protein uL14 (141 aa).

It belongs to the universal ribosomal protein uL14 family.

The protein is Large ribosomal subunit protein uL14 (RPL23) of Tetrahymena thermophila (strain SB210).